We begin with the raw amino-acid sequence, 424 residues long: Imidazolonepropionase (424 aa).

Residues H85 and H87 each contribute to the Fe(3+) site. The Zn(2+) site is built by H85 and H87. The 4-imidazolone-5-propanoate site is built by R94, Y157, and H190. Residue Y157 coordinates N-formimidoyl-L-glutamate. H255 contacts Fe(3+). H255 contacts Zn(2+). A 4-imidazolone-5-propanoate-binding site is contributed by E258. D329 serves as a coordination point for Fe(3+). D329 is a Zn(2+) binding site. N-formimidoyl-L-glutamate is bound by residues N331 and G333. S334 is a 4-imidazolone-5-propanoate binding site.

Belongs to the metallo-dependent hydrolases superfamily. HutI family. The cofactor is Zn(2+). Fe(3+) serves as cofactor.

It is found in the cytoplasm. The catalysed reaction is 4-imidazolone-5-propanoate + H2O = N-formimidoyl-L-glutamate. Its pathway is amino-acid degradation; L-histidine degradation into L-glutamate; N-formimidoyl-L-glutamate from L-histidine: step 3/3. In terms of biological role, catalyzes the hydrolytic cleavage of the carbon-nitrogen bond in imidazolone-5-propanoate to yield N-formimidoyl-L-glutamate. It is the third step in the universal histidine degradation pathway. This chain is Imidazolonepropionase, found in Brevibacillus brevis (strain 47 / JCM 6285 / NBRC 100599).